A 390-amino-acid chain; its full sequence is Bifunctional enzyme IspD/IspF (390 aa).

Residues 1-229 (MAAGRGERAG…RQDHAVFPDI (229 aa)) are 2-C-methyl-D-erythritol 4-phosphate cytidylyltransferase. The segment at 230–390 (RTGNGYDVHS…TVIYPGEVPE (161 aa)) is 2-C-methyl-D-erythritol 2,4-cyclodiphosphate synthase. A divalent metal cation contacts are provided by Asp-236 and His-238. 4-CDP-2-C-methyl-D-erythritol 2-phosphate contacts are provided by residues 236-238 (DVH) and 262-263 (HS). His-270 is an a divalent metal cation binding site. 4-CDP-2-C-methyl-D-erythritol 2-phosphate is bound by residues 284 to 286 (DIG), 360 to 363 (TTNE), Phe-367, and Arg-370.

It in the N-terminal section; belongs to the IspD/TarI cytidylyltransferase family. IspD subfamily. In the C-terminal section; belongs to the IspF family. A divalent metal cation is required as a cofactor.

It carries out the reaction 2-C-methyl-D-erythritol 4-phosphate + CTP + H(+) = 4-CDP-2-C-methyl-D-erythritol + diphosphate. The enzyme catalyses 4-CDP-2-C-methyl-D-erythritol 2-phosphate = 2-C-methyl-D-erythritol 2,4-cyclic diphosphate + CMP. Its pathway is isoprenoid biosynthesis; isopentenyl diphosphate biosynthesis via DXP pathway; isopentenyl diphosphate from 1-deoxy-D-xylulose 5-phosphate: step 2/6. The protein operates within isoprenoid biosynthesis; isopentenyl diphosphate biosynthesis via DXP pathway; isopentenyl diphosphate from 1-deoxy-D-xylulose 5-phosphate: step 4/6. Functionally, bifunctional enzyme that catalyzes the formation of 4-diphosphocytidyl-2-C-methyl-D-erythritol from CTP and 2-C-methyl-D-erythritol 4-phosphate (MEP) (IspD), and catalyzes the conversion of 4-diphosphocytidyl-2-C-methyl-D-erythritol 2-phosphate (CDP-ME2P) to 2-C-methyl-D-erythritol 2,4-cyclodiphosphate (ME-CPP) with a corresponding release of cytidine 5-monophosphate (CMP) (IspF). The protein is Bifunctional enzyme IspD/IspF of Brucella suis biovar 1 (strain 1330).